The sequence spans 485 residues: Glutamyl-tRNA(Gln) amidotransferase subunit A (485 aa).

Residues K78 and S153 each act as charge relay system in the active site. S177 serves as the catalytic Acyl-ester intermediate.

This sequence belongs to the amidase family. GatA subfamily. In terms of assembly, heterotrimer of A, B and C subunits.

The enzyme catalyses L-glutamyl-tRNA(Gln) + L-glutamine + ATP + H2O = L-glutaminyl-tRNA(Gln) + L-glutamate + ADP + phosphate + H(+). Its function is as follows. Allows the formation of correctly charged Gln-tRNA(Gln) through the transamidation of misacylated Glu-tRNA(Gln) in organisms which lack glutaminyl-tRNA synthetase. The reaction takes place in the presence of glutamine and ATP through an activated gamma-phospho-Glu-tRNA(Gln). The protein is Glutamyl-tRNA(Gln) amidotransferase subunit A of Bacillus cereus (strain ATCC 10987 / NRS 248).